The chain runs to 139 residues: NADH dehydrogenase [ubiquinone] 1 alpha subcomplex subunit MCI4 (139 aa).

This sequence belongs to the complex I NDUFA5 subunit family.

The protein localises to the mitochondrion inner membrane. In terms of biological role, accessory subunit of the mitochondrial membrane respiratory chain NADH dehydrogenase (Complex I), that is believed not to be involved in catalysis. Complex I functions in the transfer of electrons from NADH to the respiratory chain. The immediate electron acceptor for the enzyme is believed to be ubiquinone. Involved in osmotic and oxidative resistance, yeast to hypha transition and the ability to damage and invade oral epithelial cells. The sequence is that of NADH dehydrogenase [ubiquinone] 1 alpha subcomplex subunit MCI4 from Candida albicans (strain SC5314 / ATCC MYA-2876) (Yeast).